Reading from the N-terminus, the 300-residue chain is MTDTPDPAAVLSPAVKAAVLSEALPYIRRFHGKTIVVKYGGNAMTEERLQRSFAHDVVLLKLVGLNPVVVHGGGPQIDDALRRIGKQGTFVQGIRVTDAETMEVVEWVLGGQVQQDIVMMINEVGGKAVGLTGKDGMLIQATKKLMVNKDDPSQPLDIGFVGDITRVEPAVVKALQDDQFIPVISPIGYGEDGTAYNINADVVAGKMAEVLGAEKLLMMTNTPGVLDKGGKLLRSLSAQTIDELFADGTISGGMLPKISSSLDAAKNGVNSVHIVDGRVPHCLLLEILTDQGVGTMISSH.

Substrate contacts are provided by residues 73–74, R95, and N197; that span reads GG.

The protein belongs to the acetylglutamate kinase family. ArgB subfamily.

The protein resides in the cytoplasm. The enzyme catalyses N-acetyl-L-glutamate + ATP = N-acetyl-L-glutamyl 5-phosphate + ADP. Its pathway is amino-acid biosynthesis; L-arginine biosynthesis; N(2)-acetyl-L-ornithine from L-glutamate: step 2/4. Functionally, catalyzes the ATP-dependent phosphorylation of N-acetyl-L-glutamate. This Bordetella parapertussis (strain 12822 / ATCC BAA-587 / NCTC 13253) protein is Acetylglutamate kinase.